A 184-amino-acid polypeptide reads, in one-letter code: Ribosome-recycling factor (184 aa).

The protein belongs to the RRF family.

The protein localises to the cytoplasm. Its function is as follows. Responsible for the release of ribosomes from messenger RNA at the termination of protein biosynthesis. May increase the efficiency of translation by recycling ribosomes from one round of translation to another. This is Ribosome-recycling factor from Onion yellows phytoplasma (strain OY-M).